An 88-amino-acid chain; its full sequence is Histone H2A-beta, sperm (88 aa).

Belongs to the histone H2A family. In terms of assembly, the nucleosome is a histone octamer containing two molecules each of H2A, H2B, H3 and H4 assembled in one H3-H4 heterotetramer and two H2A-H2B heterodimers. The octamer wraps approximately 147 bp of DNA. Monoubiquitination in C-terminus gives a specific tag for epigenetic transcriptional repression.

It is found in the nucleus. The protein resides in the chromosome. Its function is as follows. Core component of nucleosome. Nucleosomes wrap and compact DNA into chromatin, limiting DNA accessibility to the cellular machineries which require DNA as a template. Histones thereby play a central role in transcription regulation, DNA repair, DNA replication and chromosomal stability. DNA accessibility is regulated via a complex set of post-translational modifications of histones, also called histone code, and nucleosome remodeling. The polypeptide is Histone H2A-beta, sperm (Strongylocentrotus purpuratus (Purple sea urchin)).